A 376-amino-acid polypeptide reads, in one-letter code: Phospho-N-acetylmuramoyl-pentapeptide-transferase (376 aa).

Transmembrane regions (helical) follow at residues 28 to 48 (RTIM…PWFI), 76 to 96 (TMGG…WADL), 100 to 120 (FVLA…LDDF), 135 to 155 (YKLI…FLLA), 179 to 199 (YPIE…VVAT), 211 to 231 (GLAI…AYIV), 252 to 272 (AGEL…FLWY), 279 to 299 (VFMG…LAVF), 307 to 327 (IILG…VLSF), and 353 to 373 (KIIV…LASM).

It belongs to the glycosyltransferase 4 family. MraY subfamily. Requires Mg(2+) as cofactor.

Its subcellular location is the cell inner membrane. The catalysed reaction is UDP-N-acetyl-alpha-D-muramoyl-L-alanyl-gamma-D-glutamyl-meso-2,6-diaminopimeloyl-D-alanyl-D-alanine + di-trans,octa-cis-undecaprenyl phosphate = di-trans,octa-cis-undecaprenyl diphospho-N-acetyl-alpha-D-muramoyl-L-alanyl-D-glutamyl-meso-2,6-diaminopimeloyl-D-alanyl-D-alanine + UMP. It participates in cell wall biogenesis; peptidoglycan biosynthesis. Catalyzes the initial step of the lipid cycle reactions in the biosynthesis of the cell wall peptidoglycan: transfers peptidoglycan precursor phospho-MurNAc-pentapeptide from UDP-MurNAc-pentapeptide onto the lipid carrier undecaprenyl phosphate, yielding undecaprenyl-pyrophosphoryl-MurNAc-pentapeptide, known as lipid I. This chain is Phospho-N-acetylmuramoyl-pentapeptide-transferase, found in Sorangium cellulosum (strain So ce56) (Polyangium cellulosum (strain So ce56)).